The chain runs to 696 residues: DNA-directed RNA polymerase subunit beta' (696 aa).

Cys69, Cys71, Cys87, and Cys90 together coordinate Zn(2+). Mg(2+) contacts are provided by Asp504, Asp506, and Asp508.

The protein belongs to the RNA polymerase beta' chain family. RpoC1 subfamily. In terms of assembly, in plastids the minimal PEP RNA polymerase catalytic core is composed of four subunits: alpha, beta, beta', and beta''. When a (nuclear-encoded) sigma factor is associated with the core the holoenzyme is formed, which can initiate transcription. The cofactor is Mg(2+). Zn(2+) is required as a cofactor.

Its subcellular location is the plastid. The protein localises to the chloroplast. The catalysed reaction is RNA(n) + a ribonucleoside 5'-triphosphate = RNA(n+1) + diphosphate. Its function is as follows. DNA-dependent RNA polymerase catalyzes the transcription of DNA into RNA using the four ribonucleoside triphosphates as substrates. The polypeptide is DNA-directed RNA polymerase subunit beta' (Pinus thunbergii (Japanese black pine)).